The chain runs to 407 residues: Frizzled/smoothened-like sans CRD protein J (407 aa).

Positions 1-23 (MKFLFSVILVIISFLGISKIVNG) are cleaved as a signal peptide. Residues 24 to 89 (QIACPSPFLY…WNSFNKLVKQ (66 aa)) lie on the Extracellular side of the membrane. Asn-37 is a glycosylation site (N-linked (GlcNAc...) asparagine). Residues 90–110 (MGAVAFTCSAIIMIIYGPLMN) traverse the membrane as a helical segment. The Cytoplasmic portion of the chain corresponds to 111–120 (RSFFKFDRHT). Residues 121–141 (ITVFCFALSTFFIGVSDLMFA) form a helical membrane-spanning segment. Topologically, residues 142–169 (TNDVDMVCPESHRYARQTDKTCATNGVL) are extracellular. The chain crosses the membrane as a helical span at residues 170-190 (FQFGWLGSVMWFAFLSIDGFF). At 191 to 199 (RASGKKMNK) the chain is on the cytoplasmic side. Residues 200–220 (IAFAIVLASIWILNIVLSFAP) traverse the membrane as a helical segment. The Extracellular portion of the chain corresponds to 221–246 (MGGDQYGAYFVGQVNCWILVKNWQYA). Residues 247 to 267 (FFWAELIVSLAIGFVGICLTI) form a helical membrane-spanning segment. Topologically, residues 268-285 (YSLIRKTSDGNTLKHVTP) are cytoplasmic. A helical membrane pass occupies residues 286–306 (LILVFLLFCQYLYMIIFYGII). Residues 307–354 (NEKKDHYQNILAEQVGCIFNNALAKMKVPGIVYAGECTFNETITFSSQ) are Extracellular-facing. Residue Asn-346 is glycosylated (N-linked (GlcNAc...) asparagine). The helical transmembrane segment at 355 to 375 (YAFLFFVRLLGIEIFAFYLFS) threads the bilayer. At 376–407 (KETLLLIKSSYIATMFGLGDKDAYDVELEETD) the chain is on the cytoplasmic side.

This sequence belongs to the G-protein coupled receptor Fz/Smo family.

The protein localises to the membrane. This chain is Frizzled/smoothened-like sans CRD protein J (fscJ), found in Dictyostelium discoideum (Social amoeba).